The chain runs to 1243 residues: Plasma membrane calcium-transporting ATPase 2 (1243 aa).

A compositionally biased stretch (polar residues) spans Met1–Asn13. Residues Met1 to Phe24 are disordered. At Met1–Thr94 the chain is on the cytoplasmic side. The residue at position 18 (Ser18) is a Phosphoserine. The helical transmembrane segment at Phe95–Ala115 threads the bilayer. Residues Ile116–Ile152 lie on the Extracellular side of the membrane. The helical transmembrane segment at Glu153–Trp173 threads the bilayer. Residues Ser174–Leu390 are Cytoplasmic-facing. Residues Gly334–Lys381 form a disordered region. A helical membrane pass occupies residues Thr391–Ile410. At Ile411 to Phe443 the chain is on the extracellular side. A helical transmembrane segment spans residues Phe444–Leu461. Topologically, residues Ala462–Ile875 are cytoplasmic. The active-site 4-aspartylphosphate intermediate is the Asp499. Mg(2+) is bound by residues Asp820 and Asp824. A helical membrane pass occupies residues Ser876 to Thr895. The Extracellular portion of the chain corresponds to Gly896–Leu905. The helical transmembrane segment at Lys906–Ala926 threads the bilayer. Topologically, residues Thr927–Leu946 are cytoplasmic. Residues Ile947 to Leu969 form a helical membrane-spanning segment. The Extracellular segment spans residues Leu970–Leu987. A helical transmembrane segment spans residues His988–Asn1009. Residues Glu1010–Arg1028 lie on the Cytoplasmic side of the membrane. Residues Asn1029–Gly1050 traverse the membrane as a helical segment. The Extracellular segment spans residues Gly1051–Gln1060. Residues Leu1061–Ala1082 traverse the membrane as a helical segment. Topologically, residues Thr1083–Leu1243 are cytoplasmic. Phosphoserine occurs at positions 1120, 1132, and 1134. The segment at Leu1123–Gln1140 is calmodulin-binding subdomain A. The residue at position 1139 (Thr1139) is a Phosphothreonine; by PKC. Positions Ile1141–Ser1150 are calmodulin-binding subdomain B. Phosphoserine occurs at positions 1146, 1151, 1163, 1165, 1177, and 1178. Thr1188 is modified (phosphothreonine). The segment at Ala1194–Leu1243 is disordered. Low complexity-rich tracts occupy residues Leu1196–Ser1211 and Thr1220–Ser1234. Residue Ser1201 is modified to Phosphoserine; by PKA. Residue Ser1211 is modified to Phosphoserine.

Belongs to the cation transport ATPase (P-type) (TC 3.A.3) family. Type IIB subfamily. Interacts with PDZD11. As to expression, mainly expressed in brain cortex. Found in low levels in skeletal muscle, heart muscle, stomach, liver, kidney and lung. Isoforms containing segment B are found in brain cortex and at low levels in other tissues. Isoforms containing segments X and W are found at low levels in all tissues. Isoforms containing segment A and segment Z are found at low levels in skeletal muscle and heart muscle.

The protein localises to the cell membrane. The protein resides in the synapse. It is found in the apical cell membrane. It localises to the basolateral cell membrane. The enzyme catalyses Ca(2+)(in) + ATP + H2O = Ca(2+)(out) + ADP + phosphate + H(+). Up-regulated by calmodulin which increases the affinity of the pump for Ca(2+) ions. ATP-driven Ca(2+) ion pump involved in the maintenance of basal intracellular Ca(2+) levels in specialized cells of cerebellar circuit and vestibular and cochlear systems. Uses ATP as an energy source to transport cytosolic Ca(2+) ions across the plasma membrane to the extracellular compartment. Has fast activation and Ca(2+) clearance rate suited to control fast neuronal Ca(2+) dynamics. At parallel fiber to Purkinje neuron synapse, mediates presynaptic Ca(2+) efflux in response to climbing fiber-induced Ca(2+) rise. Provides for fast return of Ca(2+) concentrations back to their resting levels, ultimately contributing to long-term depression induction and motor learning. Plays an essential role in hearing and balance. In cochlear hair cells, shuttles Ca(2+) ions from stereocilia to the endolymph and dissipates Ca(2+) transients generated by the opening of the mechanoelectrical transduction channels. Regulates Ca(2+) levels in the vestibular system, where it contributes to the formation of otoconia. In non-excitable cells, regulates Ca(2+) signaling through spatial control of Ca(2+) ions extrusion and dissipation of Ca(2+) transients generated by store-operated channels. In lactating mammary gland, allows for the high content of Ca(2+) ions in the milk. In Homo sapiens (Human), this protein is Plasma membrane calcium-transporting ATPase 2.